We begin with the raw amino-acid sequence, 245 residues long: tRNA pseudouridine synthase A (245 aa).

D52 functions as the Nucleophile in the catalytic mechanism. Residue Y111 coordinates substrate.

The protein belongs to the tRNA pseudouridine synthase TruA family. As to quaternary structure, homodimer.

It carries out the reaction uridine(38/39/40) in tRNA = pseudouridine(38/39/40) in tRNA. Formation of pseudouridine at positions 38, 39 and 40 in the anticodon stem and loop of transfer RNAs. The protein is tRNA pseudouridine synthase A of Rhodopseudomonas palustris (strain BisB5).